Consider the following 128-residue polypeptide: Azurin (128 aa).

The Plastocyanin-like domain occupies 1–128 (AECKVTVDST…AMMKGTVTLK (128 aa)). Cys-3 and Cys-26 form a disulfide bridge. Residues His-46, Cys-112, His-117, and Met-121 each coordinate Cu cation.

It localises to the periplasm. Functionally, transfers electrons from cytochrome c551 to cytochrome oxidase. This is Azurin from Pseudomonas fluorescens biotype C.